Reading from the N-terminus, the 88-residue chain is Defensin-like protein 24 (88 aa).

The N-terminal stretch at 1 to 23 (MASSKFVLFAILALSLLLSGTEA) is a signal peptide. 4 disulfide bridges follow: cysteine 37-cysteine 87, cysteine 47-cysteine 72, cysteine 56-cysteine 83, and cysteine 60-cysteine 85.

Belongs to the DEFL family.

Its subcellular location is the secreted. In Arabidopsis thaliana (Mouse-ear cress), this protein is Defensin-like protein 24.